A 429-amino-acid polypeptide reads, in one-letter code: 4-hydroxy-3-methylbut-2-en-1-yl diphosphate synthase (flavodoxin) (429 aa).

[4Fe-4S] cluster-binding residues include Cys-323, Cys-326, Cys-369, and Glu-376.

The protein belongs to the IspG family. [4Fe-4S] cluster serves as cofactor.

It catalyses the reaction (2E)-4-hydroxy-3-methylbut-2-enyl diphosphate + oxidized [flavodoxin] + H2O + 2 H(+) = 2-C-methyl-D-erythritol 2,4-cyclic diphosphate + reduced [flavodoxin]. It functions in the pathway isoprenoid biosynthesis; isopentenyl diphosphate biosynthesis via DXP pathway; isopentenyl diphosphate from 1-deoxy-D-xylulose 5-phosphate: step 5/6. Converts 2C-methyl-D-erythritol 2,4-cyclodiphosphate (ME-2,4cPP) into 1-hydroxy-2-methyl-2-(E)-butenyl 4-diphosphate. In Wolbachia sp. subsp. Brugia malayi (strain TRS), this protein is 4-hydroxy-3-methylbut-2-en-1-yl diphosphate synthase (flavodoxin).